Reading from the N-terminus, the 432-residue chain is Glutamyl-tRNA reductase (432 aa).

Substrate is bound by residues 50–53 (TCNR), serine 110, 115–117 (ETQ), and glutamine 121. Residue cysteine 51 is the Nucleophile of the active site. Residue 190–195 (GVGEMS) coordinates NADP(+).

This sequence belongs to the glutamyl-tRNA reductase family. As to quaternary structure, homodimer.

It catalyses the reaction (S)-4-amino-5-oxopentanoate + tRNA(Glu) + NADP(+) = L-glutamyl-tRNA(Glu) + NADPH + H(+). Its pathway is porphyrin-containing compound metabolism; protoporphyrin-IX biosynthesis; 5-aminolevulinate from L-glutamyl-tRNA(Glu): step 1/2. Functionally, catalyzes the NADPH-dependent reduction of glutamyl-tRNA(Glu) to glutamate 1-semialdehyde (GSA). The chain is Glutamyl-tRNA reductase from Sulfurimonas denitrificans (strain ATCC 33889 / DSM 1251) (Thiomicrospira denitrificans (strain ATCC 33889 / DSM 1251)).